The chain runs to 525 residues: Light-independent protochlorophyllide reductase subunit B (525 aa).

Asp-36 contacts [4Fe-4S] cluster. The active-site Proton donor is the Asp-286. Substrate is bound at residue 421 to 422 (GL).

This sequence belongs to the ChlB/BchB/BchZ family. In terms of assembly, protochlorophyllide reductase is composed of three subunits; ChlL, ChlN and ChlB. Forms a heterotetramer of two ChlB and two ChlN subunits. Requires [4Fe-4S] cluster as cofactor.

The catalysed reaction is chlorophyllide a + oxidized 2[4Fe-4S]-[ferredoxin] + 2 ADP + 2 phosphate = protochlorophyllide a + reduced 2[4Fe-4S]-[ferredoxin] + 2 ATP + 2 H2O. The protein operates within porphyrin-containing compound metabolism; chlorophyll biosynthesis (light-independent). Functionally, component of the dark-operative protochlorophyllide reductase (DPOR) that uses Mg-ATP and reduced ferredoxin to reduce ring D of protochlorophyllide (Pchlide) to form chlorophyllide a (Chlide). This reaction is light-independent. The NB-protein (ChlN-ChlB) is the catalytic component of the complex. This Prochlorococcus marinus (strain NATL1A) protein is Light-independent protochlorophyllide reductase subunit B.